Here is a 600-residue protein sequence, read N- to C-terminus: UvrABC system protein C (600 aa).

Residues 15-100 form the GIY-YIG domain; it reads NSAGVYEYFN…IKQLHPKYNI (86 aa). Residues 203 to 238 form the UVR domain; that stretch reads SVLLKNLEKQMLVLAQNENYEEAAKIRDQIATIKDL.

Belongs to the UvrC family. In terms of assembly, interacts with UvrB in an incision complex.

Its subcellular location is the cytoplasm. Functionally, the UvrABC repair system catalyzes the recognition and processing of DNA lesions. UvrC both incises the 5' and 3' sides of the lesion. The N-terminal half is responsible for the 3' incision and the C-terminal half is responsible for the 5' incision. The sequence is that of UvrABC system protein C from Campylobacter jejuni subsp. doylei (strain ATCC BAA-1458 / RM4099 / 269.97).